Here is a 210-residue protein sequence, read N- to C-terminus: Translation initiation factor IF-3 (210 aa).

Positions 169–210 (APKQAPAPKKERTEESAEKAGSAGETEPVPAASAAAEAPANV) are disordered. A compositionally biased stretch (basic and acidic residues) spans 176–186 (PKKERTEESAE). The span at 187-210 (KAGSAGETEPVPAASAAAEAPANV) shows a compositional bias: low complexity.

It belongs to the IF-3 family. As to quaternary structure, monomer.

It is found in the cytoplasm. In terms of biological role, IF-3 binds to the 30S ribosomal subunit and shifts the equilibrium between 70S ribosomes and their 50S and 30S subunits in favor of the free subunits, thus enhancing the availability of 30S subunits on which protein synthesis initiation begins. In Deinococcus deserti (strain DSM 17065 / CIP 109153 / LMG 22923 / VCD115), this protein is Translation initiation factor IF-3.